The sequence spans 79 residues: uncharacterized protein (79 aa).

It belongs to the UPF0440 family.

This is an uncharacterized protein from Methanocella arvoryzae (strain DSM 22066 / NBRC 105507 / MRE50).